We begin with the raw amino-acid sequence, 63 residues long: 2-hydroxymuconate tautomerase (63 aa).

The Proton acceptor; via imino nitrogen role is filled by Pro-2.

It belongs to the 4-oxalocrotonate tautomerase family. In terms of assembly, homohexamer.

The enzyme catalyses (2Z,4E)-2-hydroxyhexa-2,4-dienedioate = (3E)-2-oxohex-3-enedioate. It functions in the pathway aromatic compound metabolism; salicylate degradation. Its function is as follows. Catalyzes the ketonization of 2-hydroxymuconate stereoselectively to yield 2-oxo-3-hexenedioate. This chain is 2-hydroxymuconate tautomerase (nahJ), found in Pseudomonas fluorescens.